A 211-amino-acid chain; its full sequence is Outer-membrane lipoprotein carrier protein (211 aa).

Residues 1-24 form the signal peptide; that stretch reads MRNRILVSACAALAMFAMQAPAHA.

It belongs to the LolA family. In terms of assembly, monomer.

It localises to the periplasm. Participates in the translocation of lipoproteins from the inner membrane to the outer membrane. Only forms a complex with a lipoprotein if the residue after the N-terminal Cys is not an aspartate (The Asp acts as a targeting signal to indicate that the lipoprotein should stay in the inner membrane). The polypeptide is Outer-membrane lipoprotein carrier protein (Cupriavidus taiwanensis (strain DSM 17343 / BCRC 17206 / CCUG 44338 / CIP 107171 / LMG 19424 / R1) (Ralstonia taiwanensis (strain LMG 19424))).